The primary structure comprises 449 residues: 4-aminobutyrate aminotransferase (449 aa).

Lysine 294 carries the post-translational modification N6-(pyridoxal phosphate)lysine.

It belongs to the class-III pyridoxal-phosphate-dependent aminotransferase family. The cofactor is pyridoxal 5'-phosphate.

The catalysed reaction is 4-aminobutanoate + 2-oxoglutarate = succinate semialdehyde + L-glutamate. It catalyses the reaction (S)-3-amino-2-methylpropanoate + 2-oxoglutarate = 2-methyl-3-oxopropanoate + L-glutamate. It participates in amino-acid degradation; 4-aminobutanoate degradation. In Mycobacterium bovis (strain ATCC BAA-935 / AF2122/97), this protein is 4-aminobutyrate aminotransferase (gabT).